The chain runs to 202 residues: MRETMQLVPMVVEQSSRGERSFDIYSRLLRERIIFLNGEVDDTVSALVCAQLLFLEAENPKKPIHLYINSPGGMVTSGFAMYDTMRYIRAPVHTLCMGTARSMGSFLLMAGEPGTRAALPNASILIHQPSGGFQGQASDMLIHAEEIRQTKHRMTRLYAEHCGRSYEEFETAMDRDRFMTVQEALEWGLIDRILEVREDAAA.

Residue Ser102 is the Nucleophile of the active site. The active site involves His127.

This sequence belongs to the peptidase S14 family. As to quaternary structure, fourteen ClpP subunits assemble into 2 heptameric rings which stack back to back to give a disk-like structure with a central cavity, resembling the structure of eukaryotic proteasomes.

The protein localises to the cytoplasm. The catalysed reaction is Hydrolysis of proteins to small peptides in the presence of ATP and magnesium. alpha-casein is the usual test substrate. In the absence of ATP, only oligopeptides shorter than five residues are hydrolyzed (such as succinyl-Leu-Tyr-|-NHMec, and Leu-Tyr-Leu-|-Tyr-Trp, in which cleavage of the -Tyr-|-Leu- and -Tyr-|-Trp bonds also occurs).. Its function is as follows. Cleaves peptides in various proteins in a process that requires ATP hydrolysis. Has a chymotrypsin-like activity. Plays a major role in the degradation of misfolded proteins. The sequence is that of ATP-dependent Clp protease proteolytic subunit 1 from Agrobacterium fabrum (strain C58 / ATCC 33970) (Agrobacterium tumefaciens (strain C58)).